We begin with the raw amino-acid sequence, 249 residues long: UPF0758 protein BMEI0718 (249 aa).

A disordered region spans residues 1–34 (MAKKKDTPGDGEFPGFSDTLQRTPKLEKPHYAGH). Over residues 24–34 (PKLEKPHYAGH) the composition is skewed to basic and acidic residues. The MPN domain maps to 127–249 (VLGSWDKVIN…HASLRSLRLI (123 aa)). Residues His198, His200, and Asp211 each contribute to the Zn(2+) site. Positions 198–211 (HNHPSGDPTPSRAD) match the JAMM motif motif.

It belongs to the UPF0758 family.

This chain is UPF0758 protein BMEI0718, found in Brucella melitensis biotype 1 (strain ATCC 23456 / CCUG 17765 / NCTC 10094 / 16M).